Reading from the N-terminus, the 160-residue chain is Major strawberry allergen Fra a 1.08 (160 aa).

The protein belongs to the BetVI family. In terms of processing, phosphorylated in vivo. Phosphorylation prevents its activity as ribonuclease. Highly expressed in roots. Expressed a low levels in ripe red fruits.

In terms of biological role, possesses ribonuclease activity in vitro. The sequence is that of Major strawberry allergen Fra a 1.08 from Fragaria ananassa (Strawberry).